A 729-amino-acid chain; its full sequence is Fibroblast growth factor receptor 2 (729 aa).

The N-terminal stretch at 1–21 is a signal peptide; that stretch reads MFSWSYLMGLVMVATATLSLA. The Extracellular portion of the chain corresponds to 22–285; that stretch reads RPSYNIAEDT…ELDSSSEYTE (264 aa). Residues 29–62 form a disordered region; it reads EDTTLEPEDANSSGDDEDDNDGSEDFTNDNNHMR. The segment covering 31–55 has biased composition (acidic residues); it reads TTLEPEDANSSGDDEDDNDGSEDFT. The N-linked (GlcNAc...) asparagine glycan is linked to Asn39. Ig-like C2-type domains follow at residues 64-157 and 166-268; these read PYWT…YHLD and PILQ…AWLT. Residues 71-88 are heparin-binding; it reads KLEKKLHAVPAANTVKFR. Cys89 and Cys141 are oxidised to a cystine. N-linked (GlcNAc...) asparagine glycosylation is found at Asn138, Asn151, Asn175, Asn207, Asn228, Asn241, and Asn256. Cys188 and Cys252 are oxidised to a cystine. A helical membrane pass occupies residues 286–306; that stretch reads IAIYCVGGFLITCMIGTIMVC. The Cytoplasmic segment spans residues 307–729; sequence HMKGRGKKSD…SQHTNGTIKT (423 aa). Tyr374 is subject to Phosphotyrosine; by autocatalysis. The Protein kinase domain maps to 389–678; sequence LTLGKPLGEG…LTQTTNEEYL (290 aa). Residues 395–403, Lys425, 473–475, and Asn479 each bind ATP; these read LGEGCFGQV and EYA. Tyr494 carries the phosphotyrosine; by autocatalysis modification. The active-site Proton acceptor is the Asp534. Residues Tyr564, Tyr565, and Tyr677 each carry the phosphotyrosine; by autocatalysis modification. A disordered region spans residues 683–729; the sequence is PLEQYSPSYPDTRSSCSSGDDSVFSPDAMPYDPCLPKSQHTNGTIKT. Residues 693–707 are compositionally biased toward low complexity; it reads DTRSSCSSGDDSVFS. Over residues 720–729 the composition is skewed to polar residues; it reads SQHTNGTIKT.

It belongs to the protein kinase superfamily. Tyr protein kinase family. Fibroblast growth factor receptor subfamily. In terms of assembly, monomer. Homodimer after ligand binding. Post-translationally, autophosphorylated. Binding of FGF family members together with heparan sulfate proteoglycan or heparin promotes receptor dimerization and autophosphorylation on tyrosine residues. Autophosphorylation occurs in trans between the two FGFR molecules present in the dimer. In terms of processing, N-glycosylated in the endoplasmic reticulum. The N-glycan chains undergo further maturation to an Endo H-resistant form in the Golgi apparatus. Ubiquitinated. FGFR2 is rapidly ubiquitinated after autophosphorylation, leading to internalization and degradation. Subject to degradation both in lysosomes and by the proteasome.

The protein resides in the cell membrane. It is found in the golgi apparatus. It localises to the cytoplasmic vesicle. It catalyses the reaction L-tyrosyl-[protein] + ATP = O-phospho-L-tyrosyl-[protein] + ADP + H(+). Its activity is regulated as follows. Present in an inactive conformation in the absence of bound ligand. Ligand binding leads to dimerization and activation by autophosphorylation on tyrosine residues. In terms of biological role, tyrosine-protein kinase that acts as a cell-surface receptor for fibroblast growth factors and plays an essential role in the regulation of cell proliferation, differentiation, migration and apoptosis, and in the regulation of embryonic development. Required for normal embryonic patterning, limb bud development, lung morphogenesis, osteogenesis and skin development. Plays an essential role in the regulation of osteoblast differentiation, proliferation and apoptosis, and is required for normal skeleton development. Promotes cell proliferation in keratinocytes and immature osteoblasts, but promotes apoptosis in differentiated osteoblasts. Phosphorylates PLCG1, FRS2 and PAK4. Ligand binding leads to the activation of several signaling cascades. Activation of PLCG1 leads to the production of the cellular signaling molecules diacylglycerol and inositol 1,4,5-trisphosphate. Phosphorylation of FRS2 triggers recruitment of GRB2, GAB1, PIK3R1 and SOS1, and mediates activation of RAS, MAPK1/ERK2, MAPK3/ERK1 and the MAP kinase signaling pathway, as well as of the AKT1 signaling pathway. FGFR2 signaling is down-regulated by ubiquitination, internalization and degradation. Mutations that lead to constitutive kinase activation or impair normal FGFR2 maturation, internalization and degradation lead to aberrant signaling. Over-expressed FGFR2 promotes activation of STAT1. This Notophthalmus viridescens (Eastern newt) protein is Fibroblast growth factor receptor 2 (FGFR2).